The primary structure comprises 533 residues: NEDD8-activating enzyme E1 regulatory subunit (533 aa).

The segment at 330-343 (DMIADSDKFIKLQN) is interaction with uba3.

Belongs to the ubiquitin-activating E1 family. ULA1 subfamily. In terms of assembly, heterodimer of uba3 and nae1. The complex binds nedd8 and ube2m.

It participates in protein modification; protein neddylation. Its function is as follows. Regulatory subunit of the dimeric uba3-nae1 E1 enzyme. E1 activates nedd8 by first adenylating its C-terminal glycine residue with ATP, thereafter linking this residue to the side chain of the catalytic cysteine, yielding a nedd8-uba3 thioester and free AMP. E1 finally transfers nedd8 to the catalytic cysteine of ube2m. The covalent attachment of nedd8 to target proteins is known as 'neddylation' and the process is involved in the regulation of cell growth, viability and development. The chain is NEDD8-activating enzyme E1 regulatory subunit (nae1) from Danio rerio (Zebrafish).